The sequence spans 132 residues: Small ribosomal subunit protein uS9 (132 aa).

Residues 100 to 132 (LKSNGLLTRDDRTKERKKPGLKRARKAPQYTKR) are disordered. Residues 114–132 (ERKKPGLKRARKAPQYTKR) are compositionally biased toward basic residues.

The protein belongs to the universal ribosomal protein uS9 family.

This chain is Small ribosomal subunit protein uS9, found in Dehalococcoides mccartyi (strain ATCC BAA-2266 / KCTC 15142 / 195) (Dehalococcoides ethenogenes (strain 195)).